A 1192-amino-acid polypeptide reads, in one-letter code: MQIQKMFEKEINRDIKGVIKVGQDDDKNIYQELDEYVVTNELLHHMGEFFKSYKKGITGHTDKMGVWISGFFGSGKSHFLKILSYLLENKHVMDENEINKDAISFFNNKILDPMVLADMKLAGNTTTDVILFNIDSKSESDSKSDKNAIVKVFNKVFNEMQGFCGSIPWIADLERQMVKDGRYEEFKAEFEKISGNTWEEAREDFYYEEDSIIEALSKTTKMSEDAARNWYERAEEDYFISIDRFAKRVREYVEAKGNNHHVVFLIDELGQYIGNDSQLMLNLQTVVEDIGTQCGGKVWVLVTSQQDIDSVVKVNGNDFSKIQGRFDTRLSLSSAHVDEVIKKRILLKNEVGKQTLRLLYGDNSSILKNLITFSGDTAEMKIFNNEEDFVDVYPFIPYQFNLLQKVFTGIRIHGASGKHLAEGERSLLSAFQESAMKYAESETGALIPFSAFYQTIEAFLDSSIRTVIIHAQNNSRLNAYDVEVLKLLFLIKYVKELPANLENLATLMIQNISDDKIELKKKIESSLIRLSKETLIQKNGQEYIFLTNDEQDVNREIKNMHVDSAEVIQKIGDVIFNVVYQDKKYRYSPKYHFSFNTIIDDRPIGMQTNDIGLKIITPYFDATTELNDSELKMMSMRESNVILKLPQDTSYLDEMTEILRIQAYLKIKSGTAASQAIEDIKVRKSREANERKDRVHIYITEALKHAQIFVNSQQLDVKEKNPVERINDAFKVLIDNLYNKLHYVKKFIDTAKQLNELLVENTTQLTLSDDNEDANQLAVKEVNDYITRLTTRNQQITIKGITTHFTKQPYGWKDLDIASFIIKLFKGQEIKLQLNSSNLTTSERDLVNYITKRDYVERVVVKKRERISPALMKVVKDLSKEVFEVTALPDDEDGLMNRFKELLVSEKNKINVLLVQYRNTFYPGQDVLQDGKESIEQLLNISDTTSFYNKVKQLQNDFLDYAEDVEPVKAFFETQRDIYDDAVKRLNIFEKNQTYVTDQKVTGFIESISKIVKHKEPYKNIHQLPGLIKEFDELFVELLEKECEPVKNVIESDYQTVLEELNKHEEIKSMFFNKFKNSFDGIKDRLNRVNNFYEAIAMQTESDRLKVRCIDDIANEVERRKPPVTSPCTGTTCTTVIDPIVEYKAKKKTISKNTILRGTKTIENEEDIEAVLDEIRKQLQKELEDASVIKLV.

The protein belongs to the BrxC family.

BREX systems (bacteriophage exclusion) provide immunity against bacteriophage. A core protein of a type 1 BREX system. This system allows phage adsorption but prevents phage DNA replication, without degradation of the phage DNA. Methylation of bacterial DNA by PglX probably guides self/non-self discrimination. When the brxA-brxB-brxC-pglX and pglZ-brxL operons are transformed into a susceptible B.subtilis strain (BEST7003) they confer resistance to bacteriophages SPbeta, SP16, Zeta, phi3T and SP02 and partial protection to phages SP01 and SP82G (these include lytic and temperate phage). They do not protect against phages phi105, rho10 or rho14. Additionally confers a very slight reduction in efficiency of plasmid transformation. The sequence is that of Probable ATP-binding protein BrxC from Bacillus cereus (strain H3081.97).